The sequence spans 418 residues: Tyrosine--tRNA ligase (418 aa).

Tyr34 contributes to the L-tyrosine binding site. A 'HIGH' region motif is present at residues 39-48; it reads PTADSLHLGH. Residues Tyr169 and Gln173 each coordinate L-tyrosine. A 'KMSKS' region motif is present at residues 229–233; that stretch reads KFGKS. Lys232 serves as a coordination point for ATP. The S4 RNA-binding domain occupies 352-418; the sequence is NNIVELLVSS…GKKKYFVLTY (67 aa).

It belongs to the class-I aminoacyl-tRNA synthetase family. TyrS type 1 subfamily. In terms of assembly, homodimer.

It localises to the cytoplasm. It catalyses the reaction tRNA(Tyr) + L-tyrosine + ATP = L-tyrosyl-tRNA(Tyr) + AMP + diphosphate + H(+). Catalyzes the attachment of tyrosine to tRNA(Tyr) in a two-step reaction: tyrosine is first activated by ATP to form Tyr-AMP and then transferred to the acceptor end of tRNA(Tyr). This is Tyrosine--tRNA ligase from Streptococcus pneumoniae (strain CGSP14).